The chain runs to 239 residues: Cell number regulator 6 (239 aa).

A compositionally biased stretch (polar residues) spans 1–10 (MAEDATSSHP). A disordered region spans residues 1-33 (MAEDATSSHPSRYVKLTKDQDAPAEDIRPGELN). Residues 16-29 (LTKDQDAPAEDIRP) show a composition bias toward basic and acidic residues. 2 helical membrane-spanning segments follow: residues 107–127 (CVCH…TAIF) and 136–156 (FLIG…TGIF).

It belongs to the cornifelin family. Expressed in roots, leaves, stalks, apical meristems, immature ears, endosperm, pericarp and tassel spikelets.

It localises to the membrane. This is Cell number regulator 6 (CNR6) from Zea mays (Maize).